The primary structure comprises 304 residues: MTQRLFVTGLSGFVGKHLQAYLAAAHTPWALLPVPHRYDLLEPDSLGDLWPELPDAVIHLAGQTYVPEAFRDPARTLQINLLGTLNLLQALKARGFSGTFLYISSGDVYGQVAEAALPIHEELIPHPRNPYAVSKLAAESLCLQWGITEGWRVLVARPFNHIGPGQKDSFVIASAARQIARMKQGLQANRLEVGDIDVSRDFLDVQDVLSAYLRLLSHGEAGAVYNVCSGQEQKIRELIELLADIAQVELEIVQDPARMRRAEQRRVRGSHARLHDTTGWKPEITIKQSLRAILSDWESRVREE.

NADP(+)-binding positions include 13 to 14 (FV) and 39 to 40 (DL). 105–106 (SG) contributes to the substrate binding site. Tyrosine 131 is a binding site for NADP(+). Substrate contacts are provided by residues asparagine 160, arginine 200, and 260 to 263 (RRAE).

This sequence belongs to the NAD(P)-dependent epimerase/dehydratase family. GDP-6-deoxy-D-mannose reductase subfamily.

The catalysed reaction is GDP-alpha-D-rhamnose + NAD(+) = GDP-4-dehydro-alpha-D-rhamnose + NADH + H(+). It carries out the reaction GDP-alpha-D-rhamnose + NADP(+) = GDP-4-dehydro-alpha-D-rhamnose + NADPH + H(+). Reductase that catalyzes the conversion of GDP-6-deoxy-D-mannose to GDP-4-dehydro-6-deoxy-D-mannose (GDP-D-rhamnose). This Pseudomonas aeruginosa (strain ATCC 15692 / DSM 22644 / CIP 104116 / JCM 14847 / LMG 12228 / 1C / PRS 101 / PAO1) protein is GDP-6-deoxy-D-mannose reductase (rmd).